The primary structure comprises 45 residues: Ice-structuring protein SS-8 (45 aa).

At Met-1 the chain carries Blocked amino end (Met). 3 consecutive repeats follow at residues 9-21 (KAAR…ALAA), 22-33 (KTAADAAAKAAA), and 34-45 (KAAAIAAAAASA).

This sequence belongs to the type-I AFP family.

Antifreeze proteins lower the blood freezing point. In Myoxocephalus scorpius (Shorthorn sculpin), this protein is Ice-structuring protein SS-8.